Reading from the N-terminus, the 554-residue chain is GPI alpha-1,2-mannosyltransferase 3 (554 aa).

Asparagine 26 carries N-linked (GlcNAc...) asparagine glycosylation. The next 9 helical transmembrane spans lie at 63-83 (LLLF…TSFV), 136-156 (VQLL…VADV), 192-212 (LTNT…PLEG), 224-244 (LVAL…PLLF), 255-275 (DLIL…SLMI), 315-335 (GFPV…YLAP), 340-360 (ILLV…HKEF), 362-382 (FIYP…THLK), and 387-407 (PALS…GLVH). Residue asparagine 427 is glycosylated (N-linked (GlcNAc...) asparagine).

It belongs to the glycosyltransferase 22 family. PIGB subfamily.

Its subcellular location is the endoplasmic reticulum membrane. It participates in glycolipid biosynthesis; glycosylphosphatidylinositol-anchor biosynthesis. Its function is as follows. Alpha-1,2-mannosyltransferase that catalyzes the transfer of the third mannose, via an alpha-1,2 bond, from a dolichol-phosphate-mannose (Dol-P-Man) to an alpha-D-Man-(1-&gt;6)-2-PEtn-alpha-D-Man-(1-&gt;4)-alpha-D-GlcN-(1-&gt;6)-(1-radyl,2-acyl-sn-glycero-3-phospho)-2-acyl-inositol intermediate to generate an alpha-D-Man-(1-&gt;2)-alpha-D-Man-(1-&gt;6)-2-PEtn-alpha-D-Man-(1-&gt;4)-alpha-D-GlcN-(1-&gt;6)-(1-radyl,2-acyl-sn-glycero-3-phospho)-2-acyl-inositol (also termed H6) and participates in the nineth step of the glycosylphosphatidylinositol-anchor biosynthesis. May also add the third mannose to an alpha-D-Man-(1-&gt;6)-alpha-D-Man-(1-&gt;4)-alpha-D-GlcN-(1-&gt;6)-(1-radyl,2-acyl-sn-glycero-3-phospho)-2-acyl-inositol (also termed H3) intermediate generating an alpha-D-Man-(1-&gt;2)-alpha-D-Man-(1-&gt;6)-alpha-D-Man-(1-&gt;4)-alpha-D-GlcN-(1-&gt;6)-(1-radyl,2-acyl-sn-glycero-3-phospho)-2-acyl-inositol (also termed H4). The chain is GPI alpha-1,2-mannosyltransferase 3 from Homo sapiens (Human).